We begin with the raw amino-acid sequence, 2009 residues long: ADP-ribosylation factor guanine nucleotide-exchange factor SEC7 (2009 aa).

Positions 1–220 (MSEQNSVVNA…ISLSSNGSNT (220 aa)) are disordered. A compositionally biased stretch (polar residues) spans 17–33 (ISSNVETASSVNPSVKP). Positions 37-53 (IKEEAKETNGEDQKCKG) are enriched in basic and acidic residues. Acidic residues predominate over residues 91–118 (EGEDGDEDEDEDEDEDEDNGDEDDEDVD). The segment covering 134–143 (SVSGESTESS) has biased composition (low complexity). A compositionally biased stretch (acidic residues) spans 144 to 154 (SGEDEESDESD). The segment covering 155-165 (GNTSNSSSGDE) has biased composition (low complexity). The segment covering 166 to 184 (SGSEEEEEEEEEEEEEENA) has biased composition (acidic residues). Residues 194 to 209 (SVPTNDSTAPRSTHTR) show a composition bias toward polar residues. Residues 210 to 220 (NISLSSNGSNT) show a composition bias toward low complexity. A phosphoserine mark is found at Ser-212 and Ser-215. The residue at position 334 (Thr-334) is a Phosphothreonine. Phosphoserine is present on residues Ser-447, Ser-452, and Ser-455. Residues 653-657 (NYDCN) carry the HUS box motif. Positions 771 to 788 (SSARQESRSSLSNDVRSS) are enriched in low complexity. Residues 771–814 (SSARQESRSSLSNDVRSSIMTSNDDFKPTYEDEESRSLSSQNID) form a disordered region. Lys-797 is covalently cross-linked (Glycyl lysine isopeptide (Lys-Gly) (interchain with G-Cter in ubiquitin)). The residue at position 807 (Ser-807) is a Phosphoserine. The region spanning 824–1010 (LKLRKTALSE…LFNEIANNEI (187 aa)) is the SEC7 domain. Asp-940 lines the Mg(2+) pocket. The HDS1 domain stretch occupies residues 1017–1220 (HQAMLSGDTN…QARVANPRVS (204 aa)). A Phosphoserine modification is found at Ser-1226. Thr-1240 is subject to Phosphothreonine. A compositionally biased stretch (polar residues) spans 1708–1723 (GRKSSVSHHQTTNDTS). The segment at 1708-1803 (GRKSSVSHHQ…KKTKHMKRNE (96 aa)) is disordered. Basic and acidic residues predominate over residues 1724-1751 (QHSDDDSNDRRENDSNISETVERAHQEE). Phosphoserine is present on residues Ser-1741 and Ser-1752. Positions 1764–1777 (LNGQTKLNNGNSVP) are enriched in polar residues. A C2 domain-interacting region (CIR) region spans residues 1836-1883 (FENEDFAHCIPYKEAIRITRLLEKSYEFSRDFNEDYGLRTRLVEARVV).

Interacts with ARF1. Interacts (via C-terminus) with RSP5 ubiquitin ligase.

It localises to the cytoplasm. The protein resides in the golgi apparatus. It is found in the trans-Golgi network. Its subcellular location is the cytoplasmic vesicle. The protein localises to the COPI-coated vesicle membrane. It localises to the COPII-coated vesicle membrane. Guanine exchange factor that acts as an activator of ARF1 at the trans-Golgi network and is thus involved in vesicular budding and traffic between compartments of the Golgi apparatus. Activation of Arf (ADP-ribosylation factor) GTPases is essential for vesicle formation via recruitment of cargo adapters and coat proteins necessary for Golgi trafficking. Also plays an essential role in ER-to-Golgi traffic. SEC7 also acts as an effector of two Rab GTPases, YPT1 and YPT31/32. The polypeptide is ADP-ribosylation factor guanine nucleotide-exchange factor SEC7 (Saccharomyces cerevisiae (strain ATCC 204508 / S288c) (Baker's yeast)).